A 156-amino-acid chain; its full sequence is Small ribosomal subunit protein uS7 (156 aa).

This sequence belongs to the universal ribosomal protein uS7 family. Part of the 30S ribosomal subunit. Contacts proteins S9 and S11.

One of the primary rRNA binding proteins, it binds directly to 16S rRNA where it nucleates assembly of the head domain of the 30S subunit. Is located at the subunit interface close to the decoding center, probably blocks exit of the E-site tRNA. The chain is Small ribosomal subunit protein uS7 from Renibacterium salmoninarum (strain ATCC 33209 / DSM 20767 / JCM 11484 / NBRC 15589 / NCIMB 2235).